The sequence spans 353 residues: Phosphate acyltransferase (353 aa).

The protein belongs to the PlsX family. As to quaternary structure, homodimer. Probably interacts with PlsY.

Its subcellular location is the cytoplasm. It catalyses the reaction a fatty acyl-[ACP] + phosphate = an acyl phosphate + holo-[ACP]. It functions in the pathway lipid metabolism; phospholipid metabolism. Its function is as follows. Catalyzes the reversible formation of acyl-phosphate (acyl-PO(4)) from acyl-[acyl-carrier-protein] (acyl-ACP). This enzyme utilizes acyl-ACP as fatty acyl donor, but not acyl-CoA. The protein is Phosphate acyltransferase of Rhodopseudomonas palustris (strain BisB5).